Here is a 333-residue protein sequence, read N- to C-terminus: Beta-ketoacyl-[acyl-carrier-protein] synthase III (333 aa).

Catalysis depends on residues cysteine 112 and histidine 255. An ACP-binding region spans residues 256-260 (QANQR). The active site involves asparagine 285.

The protein belongs to the thiolase-like superfamily. FabH family. Homodimer.

Its subcellular location is the cytoplasm. The enzyme catalyses malonyl-[ACP] + acetyl-CoA + H(+) = 3-oxobutanoyl-[ACP] + CO2 + CoA. It participates in lipid metabolism; fatty acid biosynthesis. Catalyzes the condensation reaction of fatty acid synthesis by the addition to an acyl acceptor of two carbons from malonyl-ACP. Catalyzes the first condensation reaction which initiates fatty acid synthesis and may therefore play a role in governing the total rate of fatty acid production. Possesses both acetoacetyl-ACP synthase and acetyl transacylase activities. Its substrate specificity determines the biosynthesis of branched-chain and/or straight-chain of fatty acids. This is Beta-ketoacyl-[acyl-carrier-protein] synthase III from Synechococcus sp. (strain RCC307).